Here is a 673-residue protein sequence, read N- to C-terminus: Protein kinase C delta type (673 aa).

The 106-residue stretch at 1–106 (MAPFLRISFN…KNNGKAEFWL (106 aa)) folds into the C2 domain. Residues Thr43 and Thr50 each carry the phosphothreonine modification. Position 64 is a phosphotyrosine (Tyr64). The residue at position 130 (Ser130) is a Phosphoserine. Thr141 is modified (phosphothreonine). Tyr155 is subject to Phosphotyrosine. A Phorbol-ester/DAG-type 1 zinc finger spans residues 158 to 208 (NHEFIATFFGQPTFCSVCKEFVWGLNKQGYKCRQCNAAIHKKCIDKIIGRC). Thr218 carries the post-translational modification Phosphothreonine. The segment at 230–280 (PHRFKVYNYMSPTFCDHCGTLLWGLVKQGLKCEDCGMNVHHKCREKVANLC) adopts a Phorbol-ester/DAG-type 2 zinc-finger fold. Ser299 is subject to Phosphoserine; by autocatalysis. 2 positions are modified to phosphotyrosine; by SRC: Tyr311 and Tyr332. Positions 347-601 (FTFQKVLGKG…TGNIRLHPFF (255 aa)) constitute a Protein kinase domain. 353–361 (LGKGSFGKV) contributes to the ATP binding site. Tyr372 carries the phosphotyrosine modification. Position 376 (Lys376) interacts with ATP. Phosphothreonine is present on Thr449. Asp471 (proton acceptor) is an active-site residue. A Phosphoserine modification is found at Ser504. Thr505 bears the Phosphothreonine; by autocatalysis mark. Tyr565 is subject to Phosphotyrosine. The region spanning 602–673 (KTINWNLLEK…VNPKYEQFLE (72 aa)) is the AGC-kinase C-terminal domain. 3 positions are modified to phosphoserine: Ser643, Ser652, and Ser662.

This sequence belongs to the protein kinase superfamily. AGC Ser/Thr protein kinase family. PKC subfamily. As to quaternary structure, interacts with PDPK1 (via N-terminal region). Interacts with RAD9A. Interacts with CDCP1. Interacts with MUC1. Interacts with VASP. Interacts with CAVIN3. Interacts with PRKD2 (via N-terminus and zing-finger domain 1 and 2) in response to oxidative stress; the interaction is independent of PRKD2 tyrosine phosphorylation. Interacts with PLSC3; interaction is enhanced by UV irradiation. Autophosphorylated and/or phosphorylated at Thr-505, within the activation loop; phosphorylation at Thr-505 is not a prerequisite for enzymatic activity. Autophosphorylated at Ser-299. Upon TNFSF10/TRAIL treatment, phosphorylated at Tyr-155; phosphorylation is required for its translocation to the endoplasmic reticulum and cleavage by caspase-3. Phosphorylated at Tyr-311, Tyr-332 and Tyr-565; phosphorylation of Tyr-311 and Tyr-565 following thrombin or zymosan stimulation potentiates its kinase activity. Phosphorylated by protein kinase PDPK1; phosphorylation is inhibited by the apoptotic C-terminal cleavage product of PKN2. Phosphorylated at Tyr-311 and Tyr-332 by SRC; phosphorylation leads to enhanced autophosphorylation at Thr-505. Phosphorylated at Tyr-311 through a SYK and SRC mechanism downstream of C-type lectin receptors activation, promoting its activation. Post-translationally, proteolytically cleaved into a catalytic subunit and a regulatory subunit by caspase-3 during apoptosis which results in kinase activation.

It localises to the cytoplasm. It is found in the nucleus. The protein resides in the perinuclear region. Its subcellular location is the cell membrane. The protein localises to the mitochondrion. It localises to the endomembrane system. The catalysed reaction is L-seryl-[protein] + ATP = O-phospho-L-seryl-[protein] + ADP + H(+). The enzyme catalyses L-threonyl-[protein] + ATP = O-phospho-L-threonyl-[protein] + ADP + H(+). It catalyses the reaction L-tyrosyl-[protein] + ATP = O-phospho-L-tyrosyl-[protein] + ADP + H(+). With respect to regulation, novel PKCs (PRKCD, PRKCE, PRKCH and PRKCQ) are calcium-insensitive, but activated by diacylglycerol (DAG) and phosphatidylserine. Three specific sites; Thr-505 (activation loop of the kinase domain), Ser-643 (turn motif) and Ser-662 (hydrophobic region), need to be phosphorylated for its full activation. Activated by caspase-3 (CASP3) cleavage during apoptosis. After cleavage, the pseudosubstrate motif in the regulatory subunit is released from the substrate recognition site of the catalytic subunit, which enables PRKCD to become constitutively activated. The catalytic subunit which displays properties of a sphingosine-dependent protein kinase is activated by D-erythro-sphingosine (Sph) or N,N-dimethyl-D-erythrosphingosine (DMS) or N,N,N-trimethyl-D-erythrosphingosine (TMS), but not by ceramide or Sph-1-P and is strongly inhibited by phosphatidylserine. Its function is as follows. Calcium-independent, phospholipid- and diacylglycerol (DAG)-dependent serine/threonine-protein kinase that plays contrasting roles in cell death and cell survival by functioning as a pro-apoptotic protein during DNA damage-induced apoptosis, but acting as an anti-apoptotic protein during cytokine receptor-initiated cell death, is involved in tumor suppression, is required for oxygen radical production by NADPH oxidase and acts as a positive or negative regulator in platelet functional responses. Upon DNA damage, activates the promoter of the death-promoting transcription factor BCLAF1/Btf to trigger BCLAF1-mediated p53/TP53 gene transcription and apoptosis. In response to oxidative stress, interact with and activate CHUK/IKKA in the nucleus, causing the phosphorylation of p53/TP53. In the case of ER stress or DNA damage-induced apoptosis, can form a complex with the tyrosine-protein kinase ABL1 which trigger apoptosis independently of p53/TP53. In cytosol can trigger apoptosis by activating MAPK11 or MAPK14, inhibiting AKT1 and decreasing the level of X-linked inhibitor of apoptosis protein (XIAP), whereas in nucleus induces apoptosis via the activation of MAPK8 or MAPK9. Upon ionizing radiation treatment, is required for the activation of the apoptosis regulators BAX and BAK, which trigger the mitochondrial cell death pathway. Can phosphorylate MCL1 and target it for degradation which is sufficient to trigger for BAX activation and apoptosis. Is required for the control of cell cycle progression both at G1/S and G2/M phases. Mediates phorbol 12-myristate 13-acetate (PMA)-induced inhibition of cell cycle progression at G1/S phase by up-regulating the CDK inhibitor CDKN1A/p21 and inhibiting the cyclin CCNA2 promoter activity. In response to UV irradiation can phosphorylate CDK1, which is important for the G2/M DNA damage checkpoint activation. Can protect glioma cells from the apoptosis induced by TNFSF10/TRAIL, probably by inducing increased phosphorylation and subsequent activation of AKT1. Can also act as tumor suppressor upon mitogenic stimulation with PMA or TPA. In N-formyl-methionyl-leucyl-phenylalanine (fMLP)-treated cells, is required for NCF1 (p47-phox) phosphorylation and activation of NADPH oxidase activity, and regulates TNF-elicited superoxide anion production in neutrophils, by direct phosphorylation and activation of NCF1 or indirectly through MAPK1/3 (ERK1/2) signaling pathways. Involved in antifungal immunity by mediating phosphorylation and activation of CARD9 downstream of C-type lectin receptors activation, promoting interaction between CARD9 and BCL10, followed by activation of NF-kappa-B and MAP kinase p38 pathways. May also play a role in the regulation of NADPH oxidase activity in eosinophil after stimulation with IL5, leukotriene B4 or PMA. In collagen-induced platelet aggregation, acts a negative regulator of filopodia formation and actin polymerization by interacting with and negatively regulating VASP phosphorylation. Downstream of PAR1, PAR4 and CD36/GP4 receptors, regulates differentially platelet dense granule secretion; acts as a positive regulator in PAR-mediated granule secretion, whereas it negatively regulates CD36/GP4-mediated granule release. Phosphorylates MUC1 in the C-terminal and regulates the interaction between MUC1 and beta-catenin. The catalytic subunit phosphorylates 14-3-3 proteins (YWHAB, YWHAZ and YWHAH) in a sphingosine-dependent fashion. Phosphorylates ELAVL1 in response to angiotensin-2 treatment. Phosphorylates mitochondrial phospholipid scramblase 3 (PLSCR3), resulting in increased cardiolipin expression on the mitochondrial outer membrane which facilitates apoptosis. Phosphorylates SMPD1 which induces SMPD1 secretion. In terms of biological role, truncated isoform 2 is inactive. In Rattus norvegicus (Rat), this protein is Protein kinase C delta type.